The following is a 474-amino-acid chain: Shufflon protein A (474 aa).

The constant region stretch occupies residues 1-361; sequence MKKYDRGWAS…TGAILSCQSG (361 aa). Residues 362–474 are variable region; the sequence is TWKTSGSLNG…GVFSVFGYQT (113 aa).

The protein is Shufflon protein A of Escherichia coli.